Here is a 516-residue protein sequence, read N- to C-terminus: Maturase K (516 aa).

This sequence belongs to the intron maturase 2 family. MatK subfamily.

It localises to the plastid. It is found in the chloroplast. In terms of biological role, usually encoded in the trnK tRNA gene intron. Probably assists in splicing its own and other chloroplast group II introns. This Galanthus nivalis (Common snowdrop) protein is Maturase K.